Consider the following 254-residue polypeptide: K88 minor fimbrial subunit FaeI (254 aa).

Residues 1–20 (MKKVTLFLFVVSLLPSTVLA) form the signal peptide.

Belongs to the fimbrial K88 protein family.

It is found in the fimbrium. Its function is as follows. K88 minor fimbrial subunit, plays an essential role in the biogenesis of the K88 fimbriae. Fimbriae (also called pili), are polar filaments radiating from the surface of the bacterium to a length of 0.5-1.5 micrometers and numbering 100-300 per cell. They enable bacteria to colonize the epithelium of specific host organs. The protein is K88 minor fimbrial subunit FaeI (faeI) of Escherichia coli.